The primary structure comprises 696 residues: Two-component response regulator ORR22 (696 aa).

One can recognise a Response regulatory domain in the interval 27-142; it reads RVLAVDDDPV…ELRNIWQHVV (116 aa). 4-aspartylphosphate is present on aspartate 78. The segment at 154 to 214 is disordered; the sequence is LDFSKECNKP…DYQENDEPSA (61 aa). Over residues 176 to 185 the composition is skewed to polar residues; that stretch reads TCGSSDQNGR. The span at 195–211 shows a compositional bias: acidic residues; sequence GEDDDEGDDNDYQENDE. Residues 214–273 constitute a DNA-binding region (myb-like GARP); sequence AAKKPRVVWSVELHRKFVAAVNQLGIDKAVPKRILELMNVEKLTRENVASHLQKYRLYLK.

The protein belongs to the ARR family. Type-B subfamily. Two-component system major event consists of a His-to-Asp phosphorelay between a sensor histidine kinase (HK) and a response regulator (RR). In plants, the His-to-Asp phosphorelay involves an additional intermediate named Histidine-containing phosphotransfer protein (HPt). This multistep phosphorelay consists of a His-Asp-His-Asp sequential transfer of a phosphate group between first a His and an Asp of the HK protein, followed by the transfer to a conserved His of the HPt protein and finally the transfer to an Asp in the receiver domain of the RR protein.

It localises to the nucleus. In terms of biological role, transcriptional activator that binds specific DNA sequence. Functions as a response regulator involved in His-to-Asp phosphorelay signal transduction system. Phosphorylation of the Asp residue in the receiver domain activates the ability of the protein to promote the transcription of target genes. May directly activate some type-A response regulators in response to cytokinins. Functions as a response regulator in response to cytokinins. This is Two-component response regulator ORR22 from Oryza sativa subsp. japonica (Rice).